The following is a 222-amino-acid chain: Transmembrane reductase CYB561D2 (222 aa).

The Cytoplasmic portion of the chain corresponds to 2 to 17; sequence ALSAETESHIYRALRT. The region spanning 14 to 217 is the Cytochrome b561 domain; that stretch reads ALRTASGAAA…NQVSNAYLYR (204 aa). The chain crosses the membrane as a helical span at residues 18-38; sequence ASGAAAHLVALGFTIFVAVLA. Residues 39 to 46 lie on the Lumenal side of the membrane; that stretch reads RPGSSLFS. A helical transmembrane segment spans residues 47 to 67; sequence WHPVLMSLAFSFLMTEALLVF. Histidine 48 contacts heme b. Residues 68–85 are Cytoplasmic-facing; that stretch reads SPESSLLHSLSRKGRARC. The heme b site is built by histidine 86 and histidine 120. Residues 86-106 traverse the membrane as a helical segment; the sequence is HWVLQLLALLCALLGLGLVIL. At 107–122 the chain is on the lumenal side; it reads HKEQLGKAHLVTRHGQ. The helical transmembrane segment at 123 to 143 threads the bilayer; that stretch reads AGLLAVLWAGLQCSGGVGLLY. At 144–162 the chain is on the cytoplasmic side; it reads PKLLPRWPLAKLKLYHATS. A heme b-binding site is contributed by histidine 159. Residues 163 to 183 traverse the membrane as a helical segment; it reads GLVGYLLGSASLLLGMCSLWF. Residues 184–186 lie on the Lumenal side of the membrane; sequence TAS. The helical transmembrane segment at 187-207 threads the bilayer; that stretch reads VTGAAWYLAVLCPVLTSLVIM. The Cytoplasmic portion of the chain corresponds to 208–222; it reads NQVSNAYLYRKRIQP.

Requires heme b as cofactor.

It localises to the endoplasmic reticulum membrane. The protein resides in the cytoplasmic vesicle membrane. It catalyses the reaction monodehydro-L-ascorbate radical(out) + L-ascorbate(in) = monodehydro-L-ascorbate radical(in) + L-ascorbate(out). The enzyme catalyses Fe(3+)(out) + L-ascorbate(in) = monodehydro-L-ascorbate radical(in) + Fe(2+)(out) + H(+). Functionally, transmembrane reductase that may use ascorbate as an electron donor in the cytoplasm and transfer electrons across endoplasmic reticulum membranes to reduce monodehydro-L-ascorbate radical and iron cations Fe(3+) in the lumen of that compartment. This chain is Transmembrane reductase CYB561D2, found in Homo sapiens (Human).